The chain runs to 112 residues: DNA-binding protein PF1087 (112 aa).

Belongs to the PDCD5 family.

The chain is DNA-binding protein PF1087 from Pyrococcus furiosus (strain ATCC 43587 / DSM 3638 / JCM 8422 / Vc1).